The following is a 352-amino-acid chain: Peptide chain release factor 1 (352 aa).

Gln229 carries the N5-methylglutamine modification.

Belongs to the prokaryotic/mitochondrial release factor family. Methylated by PrmC. Methylation increases the termination efficiency of RF1.

The protein resides in the cytoplasm. Peptide chain release factor 1 directs the termination of translation in response to the peptide chain termination codons UAG and UAA. In Gluconacetobacter diazotrophicus (strain ATCC 49037 / DSM 5601 / CCUG 37298 / CIP 103539 / LMG 7603 / PAl5), this protein is Peptide chain release factor 1.